Here is a 493-residue protein sequence, read N- to C-terminus: Alginate production protein AlgE (493 aa).

Positions 1-25 (MKLNPLMAAGMGLGFTLFWACPTLA) are cleaved as a signal peptide. Residues 93-111 (DPLEQSNSDGSGTQTSRGT) show a composition bias toward polar residues. Positions 93–115 (DPLEQSNSDGSGTQTSRGTASER) are disordered.

It belongs to the AlgE family.

The protein localises to the cell outer membrane. It participates in glycan biosynthesis; alginate biosynthesis. In terms of biological role, has non-porin-like, channel-forming properties and probably functions as an alginate permeability pore. This is Alginate production protein AlgE (algE) from Pseudomonas syringae pv. tomato (strain ATCC BAA-871 / DC3000).